The sequence spans 159 residues: Putative 4-hydroxy-4-methyl-2-oxoglutarate aldolase (159 aa).

Residues 78 to 81 (GDVI) and Arg100 contribute to the substrate site. Residue Asp101 coordinates a divalent metal cation.

This sequence belongs to the class II aldolase/RraA-like family. In terms of assembly, homotrimer. Requires a divalent metal cation as cofactor.

The catalysed reaction is 4-hydroxy-4-methyl-2-oxoglutarate = 2 pyruvate. It catalyses the reaction oxaloacetate + H(+) = pyruvate + CO2. Functionally, catalyzes the aldol cleavage of 4-hydroxy-4-methyl-2-oxoglutarate (HMG) into 2 molecules of pyruvate. Also contains a secondary oxaloacetate (OAA) decarboxylase activity due to the common pyruvate enolate transition state formed following C-C bond cleavage in the retro-aldol and decarboxylation reactions. The protein is Putative 4-hydroxy-4-methyl-2-oxoglutarate aldolase of Mycobacterium sp. (strain KMS).